The primary structure comprises 439 residues: Ribosomal protein uS12 methylthiotransferase RimO (439 aa).

Residues 2-114 (SKLYLMSLGC…VDEMILKKTN (113 aa)) form the MTTase N-terminal domain. Residues Cys11, Cys45, Cys77, Cys146, Cys150, and Cys153 each coordinate [4Fe-4S] cluster. The 232-residue stretch at 132–363 (TGSNSHAFIK…VNEVIEKSFE (232 aa)) folds into the Radical SAM core domain.

Belongs to the methylthiotransferase family. RimO subfamily. It depends on [4Fe-4S] cluster as a cofactor.

It is found in the cytoplasm. The catalysed reaction is L-aspartate(89)-[ribosomal protein uS12]-hydrogen + (sulfur carrier)-SH + AH2 + 2 S-adenosyl-L-methionine = 3-methylsulfanyl-L-aspartate(89)-[ribosomal protein uS12]-hydrogen + (sulfur carrier)-H + 5'-deoxyadenosine + L-methionine + A + S-adenosyl-L-homocysteine + 2 H(+). Its function is as follows. Catalyzes the methylthiolation of an aspartic acid residue of ribosomal protein uS12. This chain is Ribosomal protein uS12 methylthiotransferase RimO, found in Campylobacter jejuni (strain RM1221).